Consider the following 216-residue polypeptide: ADP-sugar pyrophosphatase (216 aa).

Met1 is modified (N-acetylmethionine). Ser3 and Ser10 each carry phosphoserine. Trp28 serves as a coordination point for substrate. Residue Lys42 forms a Glycyl lysine isopeptide (Lys-Gly) (interchain with G-Cter in SUMO2) linkage. Phosphothreonine is present on Thr45. Substrate is bound by residues 46 to 47 (WE) and Arg51. Positions 57-194 (QTADGVAVIP…EEHLTVDARV (138 aa)) constitute a Nudix hydrolase domain. Tyr74 carries the post-translational modification Phosphotyrosine. Arg84 provides a ligand contact to substrate. Residue Ala96 participates in Mg(2+) binding. A Nudix box motif is present at residues 97-118 (GLIDDGETPEAAALRELEEETG). Leu98 contacts substrate. Positions 112 and 116 each coordinate Mg(2+). Asp133 provides a ligand contact to substrate. Position 163 (Glu163) interacts with Mg(2+). An N6-acetyllysine mark is found at Lys207 and Lys215.

This sequence belongs to the Nudix hydrolase family. As to quaternary structure, homodimer. Interacts with PARG. Mg(2+) serves as cofactor. Post-translationally, phosphorylation at Thr-45 is required for homodimer stability; dephosphorylation results in destabilization of the homodimer. Dephosphorylation at Thr-45 promotes the ATP-synthesis activity.

It localises to the nucleus. It carries out the reaction D-ribose 5-phosphate + ATP + H(+) = ADP-D-ribose + diphosphate. The catalysed reaction is ADP-D-ribose + H2O = D-ribose 5-phosphate + AMP + 2 H(+). The enzyme catalyses 8-oxo-dGDP + H2O = 8-oxo-dGMP + phosphate + H(+). In terms of biological role, enzyme that can either act as an ADP-sugar pyrophosphatase in absence of diphosphate or catalyze the synthesis of ATP in presence of diphosphate. In absence of diphosphate, hydrolyzes with similar activities various modified nucleoside diphosphates such as ADP-ribose, ADP-mannose, ADP-glucose, 8-oxo-GDP and 8-oxo-dGDP. Can also hydrolyze other nucleotide sugars with low activity. In presence of diphosphate, mediates the synthesis of ATP in the nucleus by catalyzing the conversion of ADP-ribose to ATP and ribose 5-phosphate. Nuclear ATP synthesis takes place when dephosphorylated at Thr-45. Nuclear ATP generation is required for extensive chromatin remodeling events that are energy-consuming. Does not play a role in U8 snoRNA decapping activity. Binds U8 snoRNA. The protein is ADP-sugar pyrophosphatase of Pongo abelii (Sumatran orangutan).